Reading from the N-terminus, the 274-residue chain is ATP synthase subunit a (274 aa).

The next 5 helical transmembrane spans lie at 43–63 (TLNI…LFVF), 103–123 (VIAP…MMDL), 149–169 (DVSI…FYSI), 223–243 (LIFI…LSLP), and 245–265 (AIFH…LTIV).

The protein belongs to the ATPase A chain family. As to quaternary structure, F-type ATPases have 2 components, CF(1) - the catalytic core - and CF(0) - the membrane proton channel. CF(1) has five subunits: alpha(3), beta(3), gamma(1), delta(1), epsilon(1). CF(0) has three main subunits: a(1), b(2) and c(9-12). The alpha and beta chains form an alternating ring which encloses part of the gamma chain. CF(1) is attached to CF(0) by a central stalk formed by the gamma and epsilon chains, while a peripheral stalk is formed by the delta and b chains.

It is found in the cell inner membrane. In terms of biological role, key component of the proton channel; it plays a direct role in the translocation of protons across the membrane. In Yersinia enterocolitica serotype O:8 / biotype 1B (strain NCTC 13174 / 8081), this protein is ATP synthase subunit a.